We begin with the raw amino-acid sequence, 212 residues long: Proteasome subunit beta 2 (212 aa).

Residues Met1–Gly13 constitute a propeptide, removed in mature form; by autocatalysis. The active-site Nucleophile is the Thr14.

Belongs to the peptidase T1B family. The 20S proteasome core is composed of 14 alpha and 14 beta subunits that assemble into four stacked heptameric rings, resulting in a barrel-shaped structure. The two inner rings, each composed of seven catalytic beta subunits, are sandwiched by two outer rings, each composed of seven alpha subunits. The catalytic chamber with the active sites is on the inside of the barrel. Has a gated structure, the ends of the cylinder being occluded by the N-termini of the alpha-subunits. Is capped at one or both ends by the proteasome regulatory ATPase, PAN.

It is found in the cytoplasm. It carries out the reaction Cleavage of peptide bonds with very broad specificity.. With respect to regulation, the formation of the proteasomal ATPase PAN-20S proteasome complex, via the docking of the C-termini of PAN into the intersubunit pockets in the alpha-rings, triggers opening of the gate for substrate entry. Interconversion between the open-gate and close-gate conformations leads to a dynamic regulation of the 20S proteasome proteolysis activity. Component of the proteasome core, a large protease complex with broad specificity involved in protein degradation. This chain is Proteasome subunit beta 2, found in Ignicoccus hospitalis (strain KIN4/I / DSM 18386 / JCM 14125).